A 530-amino-acid polypeptide reads, in one-letter code: Neutral amino acid transporter A (530 aa).

N-acetylmethionine is present on M1. The segment covering 1–10 has biased composition (polar residues); sequence MEKSSETNGY. The disordered stretch occupies residues 1-28; sequence MEKSSETNGYLDSAQEGPAAGPGEPGTT. At 1-41 the chain is on the cytoplasmic side; sequence MEKSSETNGYLDSAQEGPAAGPGEPGTTARRAGRCAGFLRR. Residues 16–28 are compositionally biased toward low complexity; that stretch reads EGPAAGPGEPGTT. 3 consecutive transmembrane segments (helical) span residues 42-62, 88-108, and 119-139; these read HGLVLLTVSGVVAGAGLGAAL, MIILPLVVCSLVSGAASLDAS, and AYFGLTTLGASALAVALAFII. Residues 140 to 216 are Extracellular-facing; that stretch reads KPGSGSQTLQ…VTIEKIPIGT (77 aa). An N-linked (GlcNAc...) asparagine glycan is attached at N201. A run of 6 helical transmembrane segments spans residues 217–237, 257–277, 298–318, 328–348, 373–393, and 418–438; these read EIEGMNILGLVLFALVLGVAL, ATMVLVSWIMWYVPVGIMFLV, IFTSILGHFIHGGIVLPLIYF, FLLGLLTPFATAFATCSSSAT, IGATVNMDGAAIFQCVAAVFI, and VGAAGVPAGGVLTIAIILEAI. The disordered stretch occupies residues 488–530; it reads ELSEVKVEAIPNSKSEEETSPLVTHPNPTGPAASTPESKESVL. Phosphoserine occurs at positions 507, 525, and 528.

Belongs to the dicarboxylate/amino acid:cation symporter (DAACS) (TC 2.A.23) family. SLC1A4 subfamily.

It is found in the membrane. The protein localises to the melanosome. The enzyme catalyses L-threonine(in) + Na(+)(in) = L-threonine(out) + Na(+)(out). It carries out the reaction L-serine(in) + Na(+)(in) = L-serine(out) + Na(+)(out). It catalyses the reaction L-cysteine(in) + Na(+)(in) = L-cysteine(out) + Na(+)(out). The catalysed reaction is L-alanine(in) + Na(+)(in) = L-alanine(out) + Na(+)(out). The enzyme catalyses L-proline(in) + Na(+)(in) = L-proline(out) + Na(+)(out). It carries out the reaction 4-hydroxy-L-proline(in) + Na(+)(in) = 4-hydroxy-L-proline(out) + Na(+)(out). Functionally, sodium-dependent neutral amino-acid transporter that mediates transport of alanine, serine, cysteine, proline, hydroxyproline and threonine. The sequence is that of Neutral amino acid transporter A (SLC1A4) from Bos taurus (Bovine).